A 153-amino-acid chain; its full sequence is Putative ATP synthase subunit f, mitochondrial (153 aa).

It belongs to the ATPase F chain family. Subunit of the F-type ATPase which has 2 components, CF(1) - the catalytic core - and CF(0) - the membrane proton channel.

The protein localises to the mitochondrion membrane. In terms of biological role, mitochondrial membrane ATP synthase (F(1)F(0) ATP synthase or Complex V) produces ATP from ADP in the presence of a proton gradient across the membrane which is generated by electron transport complexes of the respiratory chain. F-type ATPases consist of two structural domains, F(1) - containing the extramembraneous catalytic core and F(0) - containing the membrane proton channel, linked together by a central stalk and a peripheral stalk. During catalysis, ATP synthesis in the catalytic domain of F(1) is coupled via a rotary mechanism of the central stalk subunits to proton translocation. Part of the complex F(0) domain. Minor subunit located with subunit a in the membrane. The polypeptide is Putative ATP synthase subunit f, mitochondrial (Caenorhabditis elegans).